A 387-amino-acid polypeptide reads, in one-letter code: 1,3-propanediol dehydrogenase (387 aa).

This sequence belongs to the iron-containing alcohol dehydrogenase family. As to quaternary structure, homooctamer. The cofactor is Fe cation.

It catalyses the reaction propane-1,3-diol + NAD(+) = 3-hydroxypropanal + NADH + H(+). With respect to regulation, inhibited by the metal chelator 1,10-phenanthroline. Catalyzes the reduction of 3-hydroxypropanal. Is considerably less active with glyceraldehyde, propionaldehyde, acetaldehyde, and butyraldehyde. Also catalyzes the oxidation of various primary, secondary, and tertiary alcohols. Is most active with substrates containing two primary alcohol groups separated by one or two carbon atoms. 1,3-propanediol is the preferred substrate. The sequence is that of 1,3-propanediol dehydrogenase from Citrobacter freundii.